The primary structure comprises 276 residues: Shikimate dehydrogenase (NADP(+)) (276 aa).

Shikimate-binding positions include 19–21 (SKS) and Thr66. Lys70 serves as the catalytic Proton acceptor. Asp82 contributes to the NADP(+) binding site. Asn91 and Asp107 together coordinate shikimate. Residues 133–137 (GAGGA), 157–162 (NRTRSR), and Leu222 each bind NADP(+). Tyr224 contributes to the shikimate binding site. Position 245 (Gly245) interacts with NADP(+).

This sequence belongs to the shikimate dehydrogenase family. Homodimer.

It carries out the reaction shikimate + NADP(+) = 3-dehydroshikimate + NADPH + H(+). It participates in metabolic intermediate biosynthesis; chorismate biosynthesis; chorismate from D-erythrose 4-phosphate and phosphoenolpyruvate: step 4/7. In terms of biological role, involved in the biosynthesis of the chorismate, which leads to the biosynthesis of aromatic amino acids. Catalyzes the reversible NADPH linked reduction of 3-dehydroshikimate (DHSA) to yield shikimate (SA). This is Shikimate dehydrogenase (NADP(+)) from Ruegeria sp. (strain TM1040) (Silicibacter sp.).